Reading from the N-terminus, the 360-residue chain is Histidinol-phosphate aminotransferase (360 aa).

At K223 the chain carries N6-(pyridoxal phosphate)lysine.

Belongs to the class-II pyridoxal-phosphate-dependent aminotransferase family. Histidinol-phosphate aminotransferase subfamily. Homodimer. Requires pyridoxal 5'-phosphate as cofactor.

The catalysed reaction is L-histidinol phosphate + 2-oxoglutarate = 3-(imidazol-4-yl)-2-oxopropyl phosphate + L-glutamate. The protein operates within amino-acid biosynthesis; L-histidine biosynthesis; L-histidine from 5-phospho-alpha-D-ribose 1-diphosphate: step 7/9. The protein is Histidinol-phosphate aminotransferase (hisC) of Bacillus subtilis (strain 168).